The chain runs to 364 residues: Nucleoside ABC transporter permease protein NupB (364 aa).

The next 8 membrane-spanning stretches (helical) occupy residues 9-29 (LVPL…MLAF), 77-99 (FNIG…ALSF), 105-125 (LLMI…MGFI), 138-158 (VITT…MIHS), 195-215 (TLNI…IIFT), 244-264 (LILS…VYGF), 284-304 (MAVA…ALLF), and 326-346 (VVTA…VMLP).

It belongs to the binding-protein-dependent transport system permease family. In terms of assembly, the complex is composed of two ATP-binding proteins (NupA), two transmembrane proteins (NupB and NupC) and a solute-binding protein (BmpA).

It is found in the cell membrane. Its function is as follows. Part of an ABC transporter complex involved in the uptake of all common nucleosides. Responsible for the translocation of the substrate across the membrane. The protein is Nucleoside ABC transporter permease protein NupB of Lactococcus lactis subsp. cremoris (strain MG1363).